A 395-amino-acid polypeptide reads, in one-letter code: Terminal nucleotidyltransferase 5B (395 aa).

This sequence belongs to the TENT family.

It localises to the cytoplasm. The protein localises to the nucleus. The enzyme catalyses RNA(n) + ATP = RNA(n)-3'-adenine ribonucleotide + diphosphate. Functionally, catalyzes the transfer of one adenosine molecule from an ATP to an mRNA poly(A) tail bearing a 3'-OH terminal group in an ATP hydrolysis-dependent manner and participates in cytoplasmic polyadenylation. May be involved in maintaining the translation efficiency of at least some genes through preventing degradation of their mRNAs. This is Terminal nucleotidyltransferase 5B from Xenopus tropicalis (Western clawed frog).